Reading from the N-terminus, the 360-residue chain is Zinc metalloproteinase nas-5 (360 aa).

An N-terminal signal peptide occupies residues 1–21 (MDIKQLLLSIILTVSVVNGRG). The region spanning 61-269 (NALLSNSPLR…KKVCAIYHCS (209 aa)) is the Peptidase M12A domain. Asn-108 carries an N-linked (GlcNAc...) asparagine glycan. Intrachain disulfides connect Cys-111–Cys-268 and Cys-134–Cys-157. His-165 provides a ligand contact to Zn(2+). Glu-166 is a catalytic residue. His-169 and His-175 together coordinate Zn(2+). One can recognise a PLAC domain in the interval 299–336 (QGDSCTDRLGICPMLKSREMLNCKVMATFCCSSCSAPT).

Requires Zn(2+) as cofactor.

It localises to the secreted. Functionally, metalloprotease. This is Zinc metalloproteinase nas-5 (nas-5) from Caenorhabditis elegans.